A 257-amino-acid chain; its full sequence is Enterotoxin type E (257 aa).

The signal sequence occupies residues 1–27; the sequence is MKKTAFILLLFIALTLTTSPLVNGSEK. A disulfide bridge connects residues Cys-120 and Cys-130. The Zn(2+) site is built by His-211, His-249, and Asp-251.

This sequence belongs to the staphylococcal/streptococcal toxin family. In terms of assembly, interacts with host MHC class II molecules composed of alpha/HLA-DRA and beta/HLA-DRB1 chains. Interacts with host T-cell receptor beta variable TRBV7-9. Zn(2+) serves as cofactor.

The protein localises to the secreted. Staphylococcal enterotoxin that activates the host immune system by binding as unprocessed molecules to major histocompatibility (MHC) complex class II and T-cell receptor (TCR) molecules. In turn, this ternary complex activates a large number of T-lymphocytes initiating a systemic release of pro-inflammatory cytokines. Also causes the intoxication staphylococcal food poisoning syndrome. The polypeptide is Enterotoxin type E (entE) (Staphylococcus aureus).